The chain runs to 360 residues: Fe(3+) ions import ATP-binding protein FbpC (360 aa).

The region spanning 4-236 is the ABC transporter domain; the sequence is LEIKGLHKHY…PKDRMIAEFL (233 aa). 36 to 43 serves as a coordination point for ATP; sequence GPSGCGKT.

It belongs to the ABC transporter superfamily. Fe(3+) ion importer (TC 3.A.1.10) family. In terms of assembly, the complex is composed of two ATP-binding proteins (FbpC), two transmembrane proteins (FbpB) and a solute-binding protein (FbpA).

Its subcellular location is the cell inner membrane. It carries out the reaction Fe(3+)(out) + ATP + H2O = Fe(3+)(in) + ADP + phosphate + H(+). In terms of biological role, part of the ABC transporter complex FbpABC involved in Fe(3+) ions import. Responsible for energy coupling to the transport system. The sequence is that of Fe(3+) ions import ATP-binding protein FbpC from Mesorhizobium japonicum (strain LMG 29417 / CECT 9101 / MAFF 303099) (Mesorhizobium loti (strain MAFF 303099)).